Reading from the N-terminus, the 516-residue chain is D-alanine--D-alanyl carrier protein ligase (516 aa).

156-157 (TS) contributes to the ATP binding site. Position 203 (Asp203) interacts with D-alanine. 298–303 (NAYGPT) lines the ATP pocket. Val307 serves as a coordination point for D-alanine. ATP contacts are provided by residues Asp389, 401–404 (YGGR), and Lys503. Lys503 provides a ligand contact to D-alanine.

It belongs to the ATP-dependent AMP-binding enzyme family. DltA subfamily.

The protein resides in the cytoplasm. The catalysed reaction is holo-[D-alanyl-carrier protein] + D-alanine + ATP = D-alanyl-[D-alanyl-carrier protein] + AMP + diphosphate. Its pathway is cell wall biogenesis; lipoteichoic acid biosynthesis. In terms of biological role, catalyzes the first step in the D-alanylation of lipoteichoic acid (LTA), the activation of D-alanine and its transfer onto the D-alanyl carrier protein (Dcp) DltC. In an ATP-dependent two-step reaction, forms a high energy D-alanyl-AMP intermediate, followed by transfer of the D-alanyl residue as a thiol ester to the phosphopantheinyl prosthetic group of the Dcp. D-alanylation of LTA plays an important role in modulating the properties of the cell wall in Gram-positive bacteria, influencing the net charge of the cell wall. In Streptococcus pneumoniae serotype 4 (strain ATCC BAA-334 / TIGR4), this protein is D-alanine--D-alanyl carrier protein ligase.